The sequence spans 118 residues: UPF0102 protein RHA1_ro06551 (118 aa).

The protein belongs to the UPF0102 family.

The protein is UPF0102 protein RHA1_ro06551 of Rhodococcus jostii (strain RHA1).